Here is a 449-residue protein sequence, read N- to C-terminus: Tubulin alpha-1C chain (449 aa).

An MREC motif motif is present at residues 1 to 4 (MREC). Gln11 lines the GTP pocket. Lys40 is modified (N6-acetyllysine). 7 residues coordinate GTP: Glu71, Ser140, Gly144, Thr145, Thr179, Asn206, and Asn228. Position 71 (Glu71) interacts with Mg(2+). Glu254 is a catalytic residue. Tyr282 carries the post-translational modification 3'-nitrotyrosine. Residues 429-449 (EKDYEEVGADSADGEDEGEEY) form a disordered region. The span at 431-449 (DYEEVGADSADGEDEGEEY) shows a compositional bias: acidic residues. At Tyr432 the chain carries Phosphotyrosine. The residue at position 439 (Ser439) is a Phosphoserine. Position 449 is a 3'-nitrotyrosine (Tyr449).

The protein belongs to the tubulin family. Dimer of alpha and beta chains. A typical microtubule is a hollow water-filled tube with an outer diameter of 25 nm and an inner diameter of 15 nM. Alpha-beta heterodimers associate head-to-tail to form protofilaments running lengthwise along the microtubule wall with the beta-tubulin subunit facing the microtubule plus end conferring a structural polarity. Microtubules usually have 13 protofilaments but different protofilament numbers can be found in some organisms and specialized cells. It depends on Mg(2+) as a cofactor. In terms of processing, some glutamate residues at the C-terminus are polyglutamylated, resulting in polyglutamate chains on the gamma-carboxyl group. Polyglutamylation plays a key role in microtubule severing by spastin (SPAST). SPAST preferentially recognizes and acts on microtubules decorated with short polyglutamate tails: severing activity by SPAST increases as the number of glutamates per tubulin rises from one to eight, but decreases beyond this glutamylation threshold. Glutamylation is also involved in cilia motility. Post-translationally, some glutamate residues at the C-terminus are monoglycylated but not polyglycylated due to the absence of functional TTLL10 in human. Monoglycylation is mainly limited to tubulin incorporated into cilia and flagella axonemes, which is required for their stability and maintenance. Flagella glycylation controls sperm motility. Both polyglutamylation and monoglycylation can coexist on the same protein on adjacent residues, and lowering glycylation levels increases polyglutamylation, and reciprocally. Acetylation of alpha chains at Lys-40 is located inside the microtubule lumen. This modification has been correlated with increased microtubule stability, intracellular transport and ciliary assembly. In terms of processing, methylation of alpha chains at Lys-40 is found in mitotic microtubules and is required for normal mitosis and cytokinesis contributing to genomic stability. Post-translationally, nitration of Tyr-449 is irreversible and interferes with normal dynein intracellular distribution. Undergoes a tyrosination/detyrosination cycle, the cyclic removal and re-addition of a C-terminal tyrosine residue by the enzymes tubulin tyrosine carboxypeptidase (MATCAP1/KIAA0895L, VASH1 or VASH2) and tubulin tyrosine ligase (TTL), respectively. In terms of processing, tyrosination promotes microtubule interaction with CAP-Gly domain-containing proteins such as CLIP1, CLIP2 and DCTN1. Tyrosination regulates the initiation of dynein-dynactin motility via interaction with DCTN1, which brings the dynein-dynactin complex into contact with microtubules. In neurons, tyrosinated tubulins mediate the initiation of retrograde vesicle transport. Post-translationally, detyrosination is involved in metaphase plate congression by guiding chromosomes during mitosis: detyrosination promotes interaction with CENPE, promoting pole-proximal transport of chromosomes toward the equator. Detyrosination increases microtubules-dependent mechanotransduction in dystrophic cardiac and skeletal muscle. In cardiomyocytes, detyrosinated microtubules are required to resist to contractile compression during contraction: detyrosination promotes association with desmin (DES) at force-generating sarcomeres, leading to buckled microtubules and mechanical resistance to contraction.

The protein resides in the cytoplasm. Its subcellular location is the cytoskeleton. It carries out the reaction GTP + H2O = GDP + phosphate + H(+). In terms of biological role, tubulin is the major constituent of microtubules, a cylinder consisting of laterally associated linear protofilaments composed of alpha- and beta-tubulin heterodimers. Microtubules grow by the addition of GTP-tubulin dimers to the microtubule end, where a stabilizing cap forms. Below the cap, tubulin dimers are in GDP-bound state, owing to GTPase activity of alpha-tubulin. The chain is Tubulin alpha-1C chain (TUBA1C) from Homo sapiens (Human).